We begin with the raw amino-acid sequence, 865 residues long: LINE-1 type transposase domain-containing protein 1 (865 aa).

Residue S2 is modified to N-acetylserine. S2 carries the phosphoserine modification. T149 is modified (phosphothreonine). At S154 the chain carries Phosphoserine. The interval 370-508 (EMKNLETQEE…EKKASRRQKE (139 aa)) is disordered. 2 stretches are compositionally biased toward acidic residues: residues 376–440 (TQEE…EQTS) and 472–483 (SVEDSESEEEEE). 3 positions are modified to phosphoserine: S472, S476, and S478. A compositionally biased stretch (basic and acidic residues) spans 498 to 508 (TEKKASRRQKE). Residues S518, S561, and S573 each carry the phosphoserine modification. Residues 590–608 (EEKKHRTLHTEELTSKEAD) are compositionally biased toward basic and acidic residues. The disordered stretch occupies residues 590–612 (EEKKHRTLHTEELTSKEADLTEE). A phosphoserine mark is found at S640, S648, and S665. Residues 642 to 684 (VLEIENSVDDLSSRMDILEERIDSLEDQIEEFSKDTMQMTKQI) adopt a coiled-coil conformation.

Belongs to the transposase 22 family.

The chain is LINE-1 type transposase domain-containing protein 1 (L1TD1) from Homo sapiens (Human).